A 64-amino-acid polypeptide reads, in one-letter code: Large ribosomal subunit protein bL35 (64 aa).

It belongs to the bacterial ribosomal protein bL35 family.

The chain is Large ribosomal subunit protein bL35 from Levilactobacillus brevis (strain ATCC 367 / BCRC 12310 / CIP 105137 / JCM 1170 / LMG 11437 / NCIMB 947 / NCTC 947) (Lactobacillus brevis).